The chain runs to 536 residues: Putative cysteine ligase BshC (536 aa).

The protein belongs to the BshC family.

In terms of biological role, involved in bacillithiol (BSH) biosynthesis. May catalyze the last step of the pathway, the addition of cysteine to glucosamine malate (GlcN-Mal) to generate BSH. The chain is Putative cysteine ligase BshC from Anoxybacillus flavithermus (strain DSM 21510 / WK1).